The sequence spans 87 residues: MSDAHGVARDQLRAFVERIERLEEEKKTIADDIKDVYGEAKGMGFDTKILKKVIALRKKDEQERMEEDLILDTYLHALGMIENPPEG.

It belongs to the UPF0335 family.

The chain is UPF0335 protein Avi_3695 from Allorhizobium ampelinum (strain ATCC BAA-846 / DSM 112012 / S4) (Agrobacterium vitis (strain S4)).